Reading from the N-terminus, the 281-residue chain is Feruloyl esterase A (281 aa).

The N-terminal stretch at 1–21 (MKQFSAKYALILLATAGQALA) is a signal peptide. 3 disulfide bridges follow: C50–C279, C112–C115, and C248–C255. Substrate is bound at residue D98. An N-linked (GlcNAc...) asparagine glycan is attached at N100. Y101 contributes to the substrate binding site. Catalysis depends on S154, which acts as the Nucleophile. D215 functions as the Charge relay system in the catalytic mechanism. H268 lines the substrate pocket. Residue H268 is the Charge relay system of the active site.

In terms of processing, glycosylated.

The protein localises to the secreted. It catalyses the reaction feruloyl-polysaccharide + H2O = ferulate + polysaccharide.. Its activity is regulated as follows. Inhibited by the specific serine esterase inhibitor diisopropylfluorophosphate. Involved in degradation of plant cell walls. Hydrolyzes the feruloyl-arabinose ester bond in arabinoxylans, and the feruloyl-galactose ester bond in pectin. Binds to cellulose. In Aspergillus niger, this protein is Feruloyl esterase A (faeA).